The chain runs to 283 residues: Acetylglutamate kinase (283 aa).

Residues 64–65 (GG), arginine 86, and asparagine 179 each bind substrate.

This sequence belongs to the acetylglutamate kinase family. ArgB subfamily.

It localises to the cytoplasm. It carries out the reaction N-acetyl-L-glutamate + ATP = N-acetyl-L-glutamyl 5-phosphate + ADP. It functions in the pathway amino-acid biosynthesis; L-arginine biosynthesis; N(2)-acetyl-L-ornithine from L-glutamate: step 2/4. Catalyzes the ATP-dependent phosphorylation of N-acetyl-L-glutamate. The protein is Acetylglutamate kinase of Campylobacter hominis (strain ATCC BAA-381 / DSM 21671 / CCUG 45161 / LMG 19568 / NCTC 13146 / CH001A).